Consider the following 871-residue polypeptide: DNA mismatch repair protein MutS (871 aa).

An ATP-binding site is contributed by G618 to S625.

This sequence belongs to the DNA mismatch repair MutS family.

Its function is as follows. This protein is involved in the repair of mismatches in DNA. It is possible that it carries out the mismatch recognition step. This protein has a weak ATPase activity. In Christiangramia forsetii (strain DSM 17595 / CGMCC 1.15422 / KT0803) (Gramella forsetii), this protein is DNA mismatch repair protein MutS.